A 269-amino-acid chain; its full sequence is Indole-3-glycerol phosphate synthase (269 aa).

This sequence belongs to the TrpC family.

It carries out the reaction 1-(2-carboxyphenylamino)-1-deoxy-D-ribulose 5-phosphate + H(+) = (1S,2R)-1-C-(indol-3-yl)glycerol 3-phosphate + CO2 + H2O. The protein operates within amino-acid biosynthesis; L-tryptophan biosynthesis; L-tryptophan from chorismate: step 4/5. This is Indole-3-glycerol phosphate synthase from Rhodococcus opacus (strain B4).